A 408-amino-acid polypeptide reads, in one-letter code: Elongation factor Tu, chloroplastic (408 aa).

The region spanning 10 to 213 (KPHVNIGTIG…KVDEYIPTPE (204 aa)) is the tr-type G domain. The segment at 19 to 26 (GHVDHGKT) is G1. Residue 19–26 (GHVDHGKT) coordinates GTP. Residue Thr26 coordinates Mg(2+). The segment at 59-63 (GITIN) is G2. A G3 region spans residues 80–83 (DCPG). GTP-binding positions include 80–84 (DCPGH) and 135–138 (NKAD). Residues 135 to 138 (NKAD) form a G4 region. A G5 region spans residues 173-175 (SAL).

This sequence belongs to the TRAFAC class translation factor GTPase superfamily. Classic translation factor GTPase family. EF-Tu/EF-1A subfamily.

It is found in the plastid. The protein resides in the chloroplast. The enzyme catalyses GTP + H2O = GDP + phosphate + H(+). GTP hydrolase that promotes the GTP-dependent binding of aminoacyl-tRNA to the A-site of ribosomes during protein biosynthesis. The protein is Elongation factor Tu, chloroplastic (tufA) of Guillardia theta (Cryptophyte).